The sequence spans 634 residues: Tyrosine-protein kinase transforming protein erbB (634 aa).

Residues 132 to 399 (FKKVKVLGSG…KMARDPPRYL (268 aa)) form the Protein kinase domain. ATP contacts are provided by residues 138–146 (LGSGAFGTV) and K165. D257 functions as the Proton acceptor in the catalytic mechanism.

The protein belongs to the protein kinase superfamily. Tyr protein kinase family. EGF receptor subfamily.

The catalysed reaction is L-tyrosyl-[protein] + ATP = O-phospho-L-tyrosyl-[protein] + ADP + H(+). This chain is Tyrosine-protein kinase transforming protein erbB (V-ERBB), found in Avian leukosis virus (ALV).